A 164-amino-acid chain; its full sequence is uncharacterized protein (164 aa).

4 consecutive transmembrane segments (helical) span residues 25-45 (QFGFSYGLFGLSGALIYPLLG), 63-83 (GMAVLLLYVPHIGSVVQVYIV), 120-140 (FWTAVFSAAAIMLGGFLADFF), and 141-161 (TVQMIFYASSILYFLSGLMMM).

It belongs to the major facilitator superfamily.

It localises to the cell membrane. This is an uncharacterized protein from Bacillus subtilis (strain 168).